We begin with the raw amino-acid sequence, 223 residues long: Small ribosomal subunit protein uS5 (223 aa).

The tract at residues 1–48 is disordered; that stretch reads MPGRQRRDGGSGPAGQNGPNSGDNSNARGDNRGGGRDRRDGGRGGNAA. A compositionally biased stretch (basic and acidic residues) spans 29 to 42; sequence GDNRGGGRDRRDGG. The region spanning 53–116 is the S5 DRBM domain; it reads FIERVVTINR…EEARKSFFRV (64 aa).

This sequence belongs to the universal ribosomal protein uS5 family. In terms of assembly, part of the 30S ribosomal subunit. Contacts proteins S4 and S8.

In terms of biological role, with S4 and S12 plays an important role in translational accuracy. Its function is as follows. Located at the back of the 30S subunit body where it stabilizes the conformation of the head with respect to the body. The polypeptide is Small ribosomal subunit protein uS5 (Rhodococcus erythropolis (strain PR4 / NBRC 100887)).